The chain runs to 141 residues: Large ribosomal subunit protein uL11 (141 aa).

This sequence belongs to the universal ribosomal protein uL11 family. In terms of assembly, part of the ribosomal stalk of the 50S ribosomal subunit. Interacts with L10 and the large rRNA to form the base of the stalk. L10 forms an elongated spine to which L12 dimers bind in a sequential fashion forming a multimeric L10(L12)X complex. In terms of processing, one or more lysine residues are methylated.

Forms part of the ribosomal stalk which helps the ribosome interact with GTP-bound translation factors. This Opitutus terrae (strain DSM 11246 / JCM 15787 / PB90-1) protein is Large ribosomal subunit protein uL11.